The sequence spans 339 residues: Centrosomal protein of 41 kDa (339 aa).

The interval 56 to 99 (RLEDSDSATSEADTDIAAKTNGKGSPEEQSPSPVQFINSTGAGD) is disordered. Residues S62 and S65 each carry the phosphoserine modification. The segment covering 62-73 (SATSEADTDIAA) has biased composition (low complexity). T75 is modified (phosphothreonine). Phosphoserine is present on residues S80 and S87. The segment covering 82 to 99 (EEQSPSPVQFINSTGAGD) has biased composition (polar residues). Residues 135–232 (PDCPFLLLDV…LAQKFPEGLV (98 aa)) enclose the Rhodanese domain. The tract at residues 283–339 (DQGPANNPSRLNQNNSAGRDLKVPAGRGGQNLPTGCPTSHSNSRTLNSGHLQGKPWK) is disordered. Residues 286-299 (PANNPSRLNQNNSA) are compositionally biased toward polar residues. At R309 the chain carries Omega-N-methylarginine. A compositionally biased stretch (polar residues) spans 313–332 (NLPTGCPTSHSNSRTLNSGH).

Belongs to the CEP41 family. Found in a complex with TTLL6.

It is found in the cytoplasm. The protein localises to the cytoskeleton. Its subcellular location is the microtubule organizing center. The protein resides in the centrosome. It localises to the cell projection. It is found in the cilium. The protein localises to the cilium basal body. Functionally, required during ciliogenesis for tubulin glutamylation in cilium. Probably acts by participating in the transport of TTLL6, a tubulin polyglutamylase, between the basal body and the cilium. In Rattus norvegicus (Rat), this protein is Centrosomal protein of 41 kDa (Cep41).